A 423-amino-acid chain; its full sequence is NDP-N-acetyl-D-galactosaminuronic acid dehydrogenase (423 aa).

Residue 11-28 coordinates NAD(+); the sequence is TISVVGLGYIGLPTATVL. Residue K218 is the Proton donor/acceptor of the active site. Residue C272 is the Nucleophile of the active site.

It belongs to the UDP-glucose/GDP-mannose dehydrogenase family.

In terms of biological role, probably involved in the synthesis of sugar components of EPS I, by converting NDP-N-acetyl-D-galactosamine into NDP-N-acetyl-D-galactosaminuronic acid. This Ralstonia nicotianae (strain ATCC BAA-1114 / GMI1000) (Ralstonia solanacearum) protein is NDP-N-acetyl-D-galactosaminuronic acid dehydrogenase (epsD).